Consider the following 134-residue polypeptide: Iron-sulfur cluster insertion protein ErpA (134 aa).

Iron-sulfur cluster-binding residues include Cys47, Cys126, and Cys128.

This sequence belongs to the HesB/IscA family. In terms of assembly, homodimer. Requires iron-sulfur cluster as cofactor.

Its function is as follows. Required for insertion of 4Fe-4S clusters for at least IspG. This chain is Iron-sulfur cluster insertion protein ErpA, found in Coxiella burnetii (strain RSA 331 / Henzerling II).